The sequence spans 198 residues: uncharacterized protein (198 aa).

The protein resides in the plastid. It localises to the chloroplast. This is an uncharacterized protein from Antithamnion sp. (Red alga).